A 366-amino-acid polypeptide reads, in one-letter code: Methylthioribose-1-phosphate isomerase (366 aa).

D260 acts as the Proton donor in catalysis.

The protein belongs to the eIF-2B alpha/beta/delta subunits family. MtnA subfamily.

It is found in the cytoplasm. The protein resides in the nucleus. It catalyses the reaction 5-(methylsulfanyl)-alpha-D-ribose 1-phosphate = 5-(methylsulfanyl)-D-ribulose 1-phosphate. Its pathway is amino-acid biosynthesis; L-methionine biosynthesis via salvage pathway; L-methionine from S-methyl-5-thio-alpha-D-ribose 1-phosphate: step 1/6. Catalyzes the interconversion of methylthioribose-1-phosphate (MTR-1-P) into methylthioribulose-1-phosphate (MTRu-1-P). The chain is Methylthioribose-1-phosphate isomerase from Caenorhabditis elegans.